A 296-amino-acid chain; its full sequence is Cytidine deaminase (296 aa).

CMP/dCMP-type deaminase domains are found at residues 52-172 and 191-296; these read TAVE…FGPK and THAD…YFAL. Residue 93–95 coordinates substrate; the sequence is NQE. H106 is a binding site for Zn(2+). E108 acts as the Proton donor in catalysis. The Zn(2+) site is built by C133 and C136.

Belongs to the cytidine and deoxycytidylate deaminase family. In terms of assembly, homodimer. Zn(2+) serves as cofactor.

It catalyses the reaction cytidine + H2O + H(+) = uridine + NH4(+). It carries out the reaction 2'-deoxycytidine + H2O + H(+) = 2'-deoxyuridine + NH4(+). Functionally, this enzyme scavenges exogenous and endogenous cytidine and 2'-deoxycytidine for UMP synthesis. This chain is Cytidine deaminase, found in Actinobacillus succinogenes (strain ATCC 55618 / DSM 22257 / CCUG 43843 / 130Z).